A 590-amino-acid polypeptide reads, in one-letter code: Zinc finger protein 285 (590 aa).

The KRAB domain maps to 8–86 (VTFKDVAVVF…WKQRIRDLTV (79 aa)). Residues 232–254 (FPCNNCGVAFADDTDPHVHHSTH) form a C2H2-type 1 zinc finger. The C2H2-type 2; degenerate zinc finger occupies 260–282 (YKCDQYGKNFSQSQDLIVHCKTH). C2H2-type zinc fingers lie at residues 316–338 (YKCK…HRVH), 344–366 (YKCD…QGVH), 372–394 (YKCE…QRVH), 400–422 (YKCS…WRFH), 428–450 (YRCG…QRVH), 456–478 (YKCN…QRVH), 484–506 (YKCE…QRDH), 512–534 (YKCD…LRVH), and 540–562 (YKCK…QRVH).

It belongs to the krueppel C2H2-type zinc-finger protein family.

The protein resides in the nucleus. Functionally, may be involved in transcriptional regulation. The sequence is that of Zinc finger protein 285 (ZNF285) from Homo sapiens (Human).